A 362-amino-acid polypeptide reads, in one-letter code: 3-dehydroquinate synthase (362 aa).

Residues 71–76 (DGEQYK), 105–109 (GVVGD), 129–130 (TT), Lys142, Lys151, and 169–172 (CLKT) contribute to the NAD(+) site. Glu184, His247, and His264 together coordinate Zn(2+).

It belongs to the sugar phosphate cyclases superfamily. Dehydroquinate synthase family. It depends on NAD(+) as a cofactor. Co(2+) serves as cofactor. Requires Zn(2+) as cofactor.

The protein localises to the cytoplasm. The catalysed reaction is 7-phospho-2-dehydro-3-deoxy-D-arabino-heptonate = 3-dehydroquinate + phosphate. The protein operates within metabolic intermediate biosynthesis; chorismate biosynthesis; chorismate from D-erythrose 4-phosphate and phosphoenolpyruvate: step 2/7. Catalyzes the conversion of 3-deoxy-D-arabino-heptulosonate 7-phosphate (DAHP) to dehydroquinate (DHQ). The chain is 3-dehydroquinate synthase from Shigella flexneri.